We begin with the raw amino-acid sequence, 224 residues long: MSPIEPAASAIFGPRLGLARRYAEALAGPGVERGLVGPREVGRLWDRHLLNCAVIGELLERGDRVVDIGSGAGLPGVPLAIARPDLQVVLLEPLLRRTEFLREMVTDLGVAVEIVRGRAEESWVQDQLGGSDAAVSRAVAALDKLTKWSMPLIRPNGRMLAIKGERAHDEVREHRRVMIASGAVDVRVVTCGANYLRPPATVVFARRGKQIARGSARMASGGTA.

S-adenosyl-L-methionine-binding positions include glycine 69, leucine 74, 119–120, and arginine 137; that span reads AE.

This sequence belongs to the methyltransferase superfamily. RNA methyltransferase RsmG family.

Its subcellular location is the cytoplasm. In terms of biological role, specifically methylates the N7 position of guanine in position 518 of 16S rRNA. The sequence is that of Ribosomal RNA small subunit methyltransferase G from Mycobacterium bovis (strain ATCC BAA-935 / AF2122/97).